The sequence spans 482 residues: Alanine aminotransferase 2 (482 aa).

Lysine 299 carries the post-translational modification N6-(pyridoxal phosphate)lysine.

This sequence belongs to the class-I pyridoxal-phosphate-dependent aminotransferase family. Alanine aminotransferase subfamily. In terms of assembly, homodimer. Pyridoxal 5'-phosphate is required as a cofactor.

The catalysed reaction is L-alanine + 2-oxoglutarate = pyruvate + L-glutamate. It functions in the pathway photosynthesis; C4 acid pathway. It participates in amino-acid degradation; L-alanine degradation via transaminase pathway; pyruvate from L-alanine: step 1/1. Its function is as follows. Transfer of C3 units between the cytosol of mesophyll and bundle sheath cells to maintain a nitrogen-carbon balance in the C4-dicarboxylic pathway. The protein is Alanine aminotransferase 2 of Hordeum vulgare (Barley).